The chain runs to 94 residues: Pyrimidine/purine nucleoside phosphorylase (94 aa).

Belongs to the nucleoside phosphorylase PpnP family.

It catalyses the reaction a purine D-ribonucleoside + phosphate = a purine nucleobase + alpha-D-ribose 1-phosphate. The catalysed reaction is adenosine + phosphate = alpha-D-ribose 1-phosphate + adenine. It carries out the reaction cytidine + phosphate = cytosine + alpha-D-ribose 1-phosphate. The enzyme catalyses guanosine + phosphate = alpha-D-ribose 1-phosphate + guanine. It catalyses the reaction inosine + phosphate = alpha-D-ribose 1-phosphate + hypoxanthine. The catalysed reaction is thymidine + phosphate = 2-deoxy-alpha-D-ribose 1-phosphate + thymine. It carries out the reaction uridine + phosphate = alpha-D-ribose 1-phosphate + uracil. The enzyme catalyses xanthosine + phosphate = alpha-D-ribose 1-phosphate + xanthine. In terms of biological role, catalyzes the phosphorolysis of diverse nucleosides, yielding D-ribose 1-phosphate and the respective free bases. Can use uridine, adenosine, guanosine, cytidine, thymidine, inosine and xanthosine as substrates. Also catalyzes the reverse reactions. This is Pyrimidine/purine nucleoside phosphorylase from Pseudomonas putida (strain ATCC 700007 / DSM 6899 / JCM 31910 / BCRC 17059 / LMG 24140 / F1).